The sequence spans 362 residues: Heat-inducible transcription repressor HrcA (362 aa).

It belongs to the HrcA family.

In terms of biological role, negative regulator of class I heat shock genes (grpE-dnaK-dnaJ and groELS operons). Prevents heat-shock induction of these operons. This chain is Heat-inducible transcription repressor HrcA, found in Rhizobium johnstonii (strain DSM 114642 / LMG 32736 / 3841) (Rhizobium leguminosarum bv. viciae).